The primary structure comprises 389 residues: 1-deoxy-D-xylulose 5-phosphate reductoisomerase (389 aa).

Residues serine 11, glycine 12, serine 13, valine 14, asparagine 39, and asparagine 122 each contribute to the NADPH site. Lysine 123 is a binding site for 1-deoxy-D-xylulose 5-phosphate. Glutamate 124 provides a ligand contact to NADPH. Aspartate 148 serves as a coordination point for Mn(2+). The 1-deoxy-D-xylulose 5-phosphate site is built by serine 149, glutamate 150, serine 174, and histidine 197. Glutamate 150 serves as a coordination point for Mn(2+). Position 203 (glycine 203) interacts with NADPH. 1-deoxy-D-xylulose 5-phosphate is bound by residues serine 210, asparagine 215, lysine 216, and glutamate 219. Glutamate 219 contacts Mn(2+).

It belongs to the DXR family. It depends on Mg(2+) as a cofactor. Mn(2+) serves as cofactor.

It carries out the reaction 2-C-methyl-D-erythritol 4-phosphate + NADP(+) = 1-deoxy-D-xylulose 5-phosphate + NADPH + H(+). It functions in the pathway isoprenoid biosynthesis; isopentenyl diphosphate biosynthesis via DXP pathway; isopentenyl diphosphate from 1-deoxy-D-xylulose 5-phosphate: step 1/6. Catalyzes the NADPH-dependent rearrangement and reduction of 1-deoxy-D-xylulose-5-phosphate (DXP) to 2-C-methyl-D-erythritol 4-phosphate (MEP). The sequence is that of 1-deoxy-D-xylulose 5-phosphate reductoisomerase from Leptospira interrogans serogroup Icterohaemorrhagiae serovar Lai (strain 56601).